We begin with the raw amino-acid sequence, 434 residues long: Serine--tRNA ligase (434 aa).

Position 239 to 241 (239 to 241) interacts with L-serine; it reads TAE. 270-272 is a binding site for ATP; sequence RSE. L-serine is bound at residue Glu293. 357–360 serves as a coordination point for ATP; it reads EISS. Ser393 contacts L-serine.

The protein belongs to the class-II aminoacyl-tRNA synthetase family. Type-1 seryl-tRNA synthetase subfamily. Homodimer. The tRNA molecule binds across the dimer.

Its subcellular location is the cytoplasm. It catalyses the reaction tRNA(Ser) + L-serine + ATP = L-seryl-tRNA(Ser) + AMP + diphosphate + H(+). It carries out the reaction tRNA(Sec) + L-serine + ATP = L-seryl-tRNA(Sec) + AMP + diphosphate + H(+). It participates in aminoacyl-tRNA biosynthesis; selenocysteinyl-tRNA(Sec) biosynthesis; L-seryl-tRNA(Sec) from L-serine and tRNA(Sec): step 1/1. Catalyzes the attachment of serine to tRNA(Ser). Is also able to aminoacylate tRNA(Sec) with serine, to form the misacylated tRNA L-seryl-tRNA(Sec), which will be further converted into selenocysteinyl-tRNA(Sec). The protein is Serine--tRNA ligase of Pseudoalteromonas translucida (strain TAC 125).